The following is a 360-amino-acid chain: DNA replication and repair protein RecF (360 aa).

ATP is bound at residue 30 to 37; it reads GQNGSGKT.

This sequence belongs to the RecF family.

The protein resides in the cytoplasm. The RecF protein is involved in DNA metabolism; it is required for DNA replication and normal SOS inducibility. RecF binds preferentially to single-stranded, linear DNA. It also seems to bind ATP. This chain is DNA replication and repair protein RecF, found in Shewanella baltica (strain OS155 / ATCC BAA-1091).